The primary structure comprises 123 residues: MATFGAGCFWGVEETFRQVPGVIDTAVGYMGGTTENPTYEEVCTDKTGHAEVVQVEYDPEQVSYEELLNVFWDNHNPTTLNRQGPDVGTNIARLFFTTLKSKEIPQKNPKRKWIKAGVGKIRL.

The active site involves C8.

This sequence belongs to the MsrA Met sulfoxide reductase family.

The enzyme catalyses L-methionyl-[protein] + [thioredoxin]-disulfide + H2O = L-methionyl-(S)-S-oxide-[protein] + [thioredoxin]-dithiol. It carries out the reaction [thioredoxin]-disulfide + L-methionine + H2O = L-methionine (S)-S-oxide + [thioredoxin]-dithiol. Its function is as follows. Has an important function as a repair enzyme for proteins that have been inactivated by oxidation. Catalyzes the reversible oxidation-reduction of methionine sulfoxide in proteins to methionine. This Thermoactinomyces vulgaris protein is Peptide methionine sulfoxide reductase MsrA.